Here is a 687-residue protein sequence, read N- to C-terminus: DNA ligase (687 aa).

NAD(+)-binding positions include aspartate 34–aspartate 38, serine 83–leucine 84, and glutamate 117. Lysine 119 serves as the catalytic N6-AMP-lysine intermediate. Positions 140, 182, 298, and 322 each coordinate NAD(+). Zn(2+)-binding residues include cysteine 416, cysteine 419, cysteine 434, and cysteine 439. Residues glutamate 609–glutamate 687 form the BRCT domain.

Belongs to the NAD-dependent DNA ligase family. LigA subfamily. The cofactor is Mg(2+). It depends on Mn(2+) as a cofactor.

It catalyses the reaction NAD(+) + (deoxyribonucleotide)n-3'-hydroxyl + 5'-phospho-(deoxyribonucleotide)m = (deoxyribonucleotide)n+m + AMP + beta-nicotinamide D-nucleotide.. Its function is as follows. DNA ligase that catalyzes the formation of phosphodiester linkages between 5'-phosphoryl and 3'-hydroxyl groups in double-stranded DNA using NAD as a coenzyme and as the energy source for the reaction. It is essential for DNA replication and repair of damaged DNA. The polypeptide is DNA ligase (Anaeromyxobacter sp. (strain K)).